The following is a 342-amino-acid chain: Cytosolic Fe-S cluster assembly factor NBP35 (342 aa).

[4Fe-4S] cluster is bound by residues C33, C47, C50, and C56. An ATP-binding site is contributed by G86 to S93. 2 residues coordinate [4Fe-4S] cluster: C259 and C262.

The protein belongs to the Mrp/NBP35 ATP-binding proteins family. NUBP1/NBP35 subfamily. Heterotetramer of 2 NBP35 and 2 CFD1 chains. [4Fe-4S] cluster is required as a cofactor.

The protein resides in the cytoplasm. Its function is as follows. Component of the cytosolic iron-sulfur (Fe/S) protein assembly (CIA) machinery. Required for maturation of extramitochondrial Fe-S proteins. The NBP35-CFD1 heterotetramer forms a Fe-S scaffold complex, mediating the de novo assembly of an Fe-S cluster and its transfer to target apoproteins. The polypeptide is Cytosolic Fe-S cluster assembly factor NBP35 (Gibberella zeae (strain ATCC MYA-4620 / CBS 123657 / FGSC 9075 / NRRL 31084 / PH-1) (Wheat head blight fungus)).